Here is a 481-residue protein sequence, read N- to C-terminus: MKPNIVLIMVDQMRGDCLGVNGNEFIETPNLDMMATEGYNFENAYTAVPSCIASRASILTGMSQKSHGRVGYEDGVSWNYENTIASEFSKAGYHTQCIGKMHVYPERNLCGFHNIMLHDGYLHFARNKEGKASTQIEQCDDYLKWFREKKGHNVDLIDIGLDCNSWVSRPWGYEENLHPTNWVVNESIDFLRRRDPSKPFFLKMSFVRPHSPLDPPKFYFDMYKDEDLPEPLMGDWANKEDEENRGKDINCVKGIINKKALKRAKAAYYGSITHIDHQIGRFLIALSEYGKLNNTIFLFVSDHGDMMGDHNWFRKGIPYEGSARVPFFIYDPGNLLKGKKGKVFDEVLELRDIMPTLLDFAHISIPDSVEGLSLKDLIEERNSTWRDYIHGEHSFGEDSNHYIVTKKDKFLWFSQRGEEQYFDLEKDPKELTNLINSEEYKERIDYLRKILIKELEGREEGYTDGNKLLKGYPVSTLKHIR.

Positions 11, 12, and 51 each coordinate Ca(2+). Catalysis depends on Cys-51, which acts as the Nucleophile. 3-oxoalanine (Cys) is present on Cys-51. Residue His-102 is part of the active site. Asp-302 and His-303 together coordinate Ca(2+).

This sequence belongs to the sulfatase family. Requires Ca(2+) as cofactor. Post-translationally, the conversion to 3-oxoalanine (also known as C-formylglycine, FGly), of a serine or cysteine residue in prokaryotes and of a cysteine residue in eukaryotes, is critical for catalytic activity.

It carries out the reaction an aryl sulfate + H2O = a phenol + sulfate + H(+). Its function is as follows. Has sulfatase activity toward para-nitrophenyl sulfate, which is increased in presence of calcium ion. This is Arylsulfatase from Clostridium perfringens (strain 13 / Type A).